We begin with the raw amino-acid sequence, 80 residues long: Exodeoxyribonuclease 7 small subunit (80 aa).

This sequence belongs to the XseB family. In terms of assembly, heterooligomer composed of large and small subunits.

It is found in the cytoplasm. It carries out the reaction Exonucleolytic cleavage in either 5'- to 3'- or 3'- to 5'-direction to yield nucleoside 5'-phosphates.. Functionally, bidirectionally degrades single-stranded DNA into large acid-insoluble oligonucleotides, which are then degraded further into small acid-soluble oligonucleotides. The polypeptide is Exodeoxyribonuclease 7 small subunit (Photobacterium profundum (strain SS9)).